Reading from the N-terminus, the 246-residue chain is ATP synthase subunit a (246 aa).

Positions 1-3 are cleaved as a propeptide — removed in mature form; sequence MFY. 7 consecutive transmembrane segments (helical) span residues 20–40, 56–76, 82–102, 112–132, 138–158, 176–196, and 203–223; these read ILTLALTNYTLYLIIVVSIIF, WGVAIIAIYDTILNLVYSQIG, FFPLIFTIFNLIFAANLISMI, LVAIVSFSLALWIGNVILGLY, FFALFVPSGTPLPLVPILVLI, ANILSGHLLMLILGSLIVNLM, and FIGGIVPIVAVIAITILEVGI.

The protein belongs to the ATPase A chain family. In terms of assembly, F-type ATPases have 2 components, CF(1) - the catalytic core - and CF(0) - the membrane proton channel. CF(1) has five subunits: alpha(3), beta(3), gamma(1), delta(1), epsilon(1). CF(0) has three main subunits: a, b and c.

It is found in the mitochondrion inner membrane. Functionally, mitochondrial membrane ATP synthase (F(1)F(0) ATP synthase or Complex V) produces ATP from ADP in the presence of a proton gradient across the membrane which is generated by electron transport complexes of the respiratory chain. F-type ATPases consist of two structural domains, F(1) - containing the extramembraneous catalytic core and F(0) - containing the membrane proton channel, linked together by a central stalk and a peripheral stalk. During catalysis, ATP synthesis in the catalytic domain of F(1) is coupled via a rotary mechanism of the central stalk subunits to proton translocation. Key component of the proton channel; it may play a direct role in the translocation of protons across the membrane. The polypeptide is ATP synthase subunit a (ATP6) (Candida albicans (strain SC5314 / ATCC MYA-2876) (Yeast)).